We begin with the raw amino-acid sequence, 253 residues long: 3-isopropylmalate dehydratase small subunit 3 (253 aa).

A chloroplast-targeting transit peptide spans 1–56; that stretch reads MATSQQFLNPTLFKSLASSNKNSCTLCPSPFLQLKSASTIFNYKPLTSSSATIITR.

Belongs to the LeuD family. As to quaternary structure, heterodimer of the large LEUC/IIL1 subunit and the small LEUD (SSU1, SSU2 or SSU3) subunits. As to expression, expressed in vascular bundles of roots, cotyledons and rosette leaves. Expressed in stem vascular bundles which branche off into lateral inflorescences. Expressed in connective tissues in anthers. In hypocotyls, expressed in parenchyma cells surrounding the vasculature. In rosette leaves, expressed in phloem cells and cells close to the xylem along the vascular bundles. In roots of adult plants, expressed in cells closely associated with the stele. In flowering stalks, expressed in parenchyma cells associated with the phloem or the xylem.

Its subcellular location is the plastid. It is found in the chloroplast stroma. The catalysed reaction is (2R,3S)-3-isopropylmalate = (2S)-2-isopropylmalate. The enzyme catalyses a 2-(omega-methylsulfanyl)alkylmalate = a 2-(omega-methylsulfanyl)alkylmaleate + H2O. It carries out the reaction 2-(3-methylsulfanyl)propylmalate = 2-(2-methylsulfanyl)propylmaleate + H2O. It catalyses the reaction a 3-(omega-methylsulfanyl)alkylmalate = a 2-(omega-methylsulfanyl)alkylmaleate + H2O. The catalysed reaction is 2-(2-methylsulfanyl)ethylmalate = 2-(2-methylsulfanyl)ethylmaleate + H2O. The enzyme catalyses 3-(2-methylsulfanyl)ethylmalate = 2-(2-methylsulfanyl)ethylmaleate + H2O. It carries out the reaction 3-(3-methylsulfanyl)propylmalate = 2-(2-methylsulfanyl)propylmaleate + H2O. It functions in the pathway amino-acid biosynthesis; L-leucine biosynthesis; L-leucine from 3-methyl-2-oxobutanoate: step 2/4. Catalyzes the isomerization between 2-isopropylmalate and 3-isopropylmalate, via the formation of 2-isopropylmaleate. Functions redundantly with LEUD1 in the methionine chain elongation pathway of aliphatic glucosinolate formation. This is 3-isopropylmalate dehydratase small subunit 3 from Arabidopsis thaliana (Mouse-ear cress).